We begin with the raw amino-acid sequence, 421 residues long: UDP-glucuronic acid decarboxylase 1 (421 aa).

The Cytoplasmic portion of the chain corresponds to 1 to 19 (MVRTRIQRLLTGINRRMMK). Residues 20-40 (LLIALALIAYVASVWGNFVNM) traverse the membrane as a helical segment. The Lumenal portion of the chain corresponds to 41-421 (SKSIQENGEQ…RVKKGRTRHN (381 aa)). Positions 99, 100, 101, 120, 121, 123, 124, 125, 145, and 146 each coordinate NAD(+). UDP-alpha-D-glucuronate is bound by residues leucine 150 and tyrosine 151. Positions 160 and 162 each coordinate NAD(+). Lysine 178 lines the UDP-alpha-D-glucuronate pocket. Threonine 179 provides a ligand contact to NAD(+). Asparagine 186, glycine 189, lysine 192, and arginine 193 together coordinate UDP-alpha-D-glucuronate. NAD(+)-binding residues include alanine 201, tyrosine 232, and lysine 236. Tyrosine 232 acts as the Proton acceptor in catalysis. Positions 246, 249, and 250 each coordinate UDP-alpha-D-glucuronate. Positions 262, 268, and 273 each coordinate NAD(+). N-linked (GlcNAc...) asparagine glycosylation is found at asparagine 317 and asparagine 386. The segment at 400–421 (ANNQYIPKPKPARVKKGRTRHN) is disordered. Residues 409–421 (KPARVKKGRTRHN) are compositionally biased toward basic residues.

This sequence belongs to the NAD(P)-dependent epimerase/dehydratase family. UDP-glucuronic acid decarboxylase subfamily. As to quaternary structure, homodimer and homotetramer. The cofactor is NAD(+).

Its subcellular location is the golgi apparatus. The protein localises to the golgi stack membrane. The catalysed reaction is UDP-alpha-D-glucuronate + H(+) = UDP-alpha-D-xylose + CO2. Its pathway is nucleotide-sugar biosynthesis; UDP-alpha-D-xylose biosynthesis; UDP-alpha-D-xylose from UDP-alpha-D-glucuronate: step 1/1. Its function is as follows. Catalyzes the NAD-dependent decarboxylation of UDP-glucuronic acid to UDP-xylose. Necessary for the biosynthesis of the core tetrasaccharide in glycosaminoglycan biosynthesis. The protein is UDP-glucuronic acid decarboxylase 1 (uxs1) of Xenopus tropicalis (Western clawed frog).